A 393-amino-acid chain; its full sequence is Pyrin and HIN domain-containing protein 1-like (393 aa).

The Pyrin domain occupies 1 to 87 (MVNEYKRIVL…ANKLKNEKAK (87 aa)). The segment at 82–188 (KNEKAKAKRK…TPTRSSSRIL (107 aa)) is disordered. Positions 87-102 (KAKRKGKGKRKTAAKR) are enriched in basic residues. 2 stretches are compositionally biased toward polar residues: residues 108-118 (PSTSQPMSTTN) and 126-151 (GRST…AIQI). A compositionally biased stretch (low complexity) spans 152-169 (SPTIASSSGQTSSRSSET). The span at 170–186 (LQSIIQSPETPTRSSSR) shows a compositional bias: polar residues. One can recognise an HIN-200 domain in the interval 219–393 (NVPKEPSEEN…NPGDKLRLML (175 aa)).

This sequence belongs to the HIN-200 family.

It is found in the nucleus. The protein is Pyrin and HIN domain-containing protein 1-like of Mus musculus (Mouse).